A 33-amino-acid chain; its full sequence is MNSNLTALRTVQASRPFLSNKKRMALFVQEKLA.

This is an uncharacterized protein from Saccharomyces cerevisiae (strain ATCC 204508 / S288c) (Baker's yeast).